The chain runs to 228 residues: Translin (228 aa).

The interval 86–90 (RFHEH) is DNA/RNA binding. A leucine-zipper region spans residues 177 to 198 (LDSGFRLLNLKNDSLRKRYDGL). At K187 the chain carries N6-acetyllysine. Phosphoserine is present on S190. At K199 the chain carries N6-acetyllysine.

The protein belongs to the translin family. As to quaternary structure, ring-shaped heterooctamer of six TSN and two TSNAX subunits, DNA/RNA binding occurs inside the ring.

Its subcellular location is the cytoplasm. The protein resides in the nucleus. DNA-binding protein that specifically recognizes consensus sequences at the breakpoint junctions in chromosomal translocations, mostly involving immunoglobulin (Ig)/T-cell receptor gene segments. Seems to recognize single-stranded DNA ends generated by staggered breaks occurring at recombination hot spots. In terms of biological role, exhibits both single-stranded and double-stranded endoribonuclease activity. May act as an activator of RNA-induced silencing complex (RISC) by facilitating endonucleolytic cleavage of the siRNA passenger strand. The protein is Translin of Homo sapiens (Human).